The sequence spans 198 residues: Glycerol-3-phosphate acyltransferase 3 (198 aa).

Helical transmembrane passes span 4–24 (TYLL…LVVG), 71–91 (LPMV…AVLG), 113–133 (LLCY…TLLF), and 147–167 (VVAV…AMCL).

Belongs to the PlsY family. Probably interacts with PlsX.

The protein resides in the cell membrane. The catalysed reaction is an acyl phosphate + sn-glycerol 3-phosphate = a 1-acyl-sn-glycero-3-phosphate + phosphate. It participates in lipid metabolism; phospholipid metabolism. In terms of biological role, catalyzes the transfer of an acyl group from acyl-phosphate (acyl-PO(4)) to glycerol-3-phosphate (G3P) to form lysophosphatidic acid (LPA). This enzyme utilizes acyl-phosphate as fatty acyl donor, but not acyl-CoA or acyl-ACP. This chain is Glycerol-3-phosphate acyltransferase 3, found in Bacillus anthracis.